A 186-amino-acid chain; its full sequence is Hydra actinoporin-like toxin 5 (186 aa).

The signal sequence occupies residues 1–20 (MLLYVCLVNLLLQSPSGVDS). Residues 158–160 (RDG) carry the Cell attachment site motif.

Belongs to the actinoporin family. HALT subfamily. As to quaternary structure, octamer or nonamer in membranes. Monomer in the soluble state. In vitro, interacts with folate receptor alpha (of target organism).

It localises to the nematocyst. The protein localises to the secreted. The protein resides in the target cell membrane. In terms of biological role, pore-forming protein that forms hydrophilic pores and causes cytolysis. Compared to equinatoxin-2 (AC P61914), it reveals lower cytolysis activity (5-12-fold difference, tested on erythrocytes), a larger pore size (probably 2-3 nm) and different affinity to membrane lipids (100-fold lower affinity to sphingomyelin). Binds to sulfatides (SFT) as well as to the two sphingolipids, lysophosphatidic acid (LPA) and sphingosine-1-phosphate (S1P). It seems to bind more strongly to LPA than to S1P and SFT. Shows cytolytic activity on HeLa cells, with a different potency than its paralogs (from most potent to less potent: HALT-4&gt;HALT-6~HALT-1&gt;HALT-3&gt;HALT-7&gt;HALT-2). Pore formation is a multi-step process that involves specific recognition of membrane lipid by a protein aromatic residues rich region, firm binding to the membrane (mainly driven by hydrophobic interactions) accompanied by the transfer of the N-terminal region to the lipid-water interface and finally pore formation after oligomerization of monomers. In vitro, binds to the folate receptor alpha (FOLR1), a GPI-anchored membrane protein that plays a major role in the uptake of folate/folic acid into cells via endocytosis, suggesting a possible involvement of this receptor in the mechanism of HALT-1-induced cell lysis. In vivo, does not cause visible paralysis in larvae of the blowfly Sarcophaga faculata, the most common arthropod prey of Hydra. The polypeptide is Hydra actinoporin-like toxin 5 (Hydra vulgaris (Hydra)).